Reading from the N-terminus, the 259-residue chain is Leucine-rich repeat-containing protein 61 (259 aa).

LRR repeat units lie at residues 54–75 (NLEW…ASLR), 76–97 (QLAV…AACE), and 98–119 (NLQS…QCLA). One can recognise an LRRCT domain in the interval 138-178 (NPLCANASYWAVVRELLPGLKVIDGERVSGRGSELYQLCRD).

This Mus musculus (Mouse) protein is Leucine-rich repeat-containing protein 61 (Lrrc61).